The following is a 264-amino-acid chain: Thymidylate synthase (264 aa).

Residue Arg21 participates in dUMP binding. His51 serves as a coordination point for (6R)-5,10-methylene-5,6,7,8-tetrahydrofolate. 126–127 (RR) serves as a coordination point for dUMP. Cys146 acts as the Nucleophile in catalysis. Residues 166 to 169 (RSCD), Asn177, and 207 to 209 (HLY) each bind dUMP. Asp169 serves as a coordination point for (6R)-5,10-methylene-5,6,7,8-tetrahydrofolate. Residue Ala263 participates in (6R)-5,10-methylene-5,6,7,8-tetrahydrofolate binding.

The protein belongs to the thymidylate synthase family. Bacterial-type ThyA subfamily. Homodimer.

The protein localises to the cytoplasm. The enzyme catalyses dUMP + (6R)-5,10-methylene-5,6,7,8-tetrahydrofolate = 7,8-dihydrofolate + dTMP. It participates in pyrimidine metabolism; dTTP biosynthesis. Catalyzes the reductive methylation of 2'-deoxyuridine-5'-monophosphate (dUMP) to 2'-deoxythymidine-5'-monophosphate (dTMP) while utilizing 5,10-methylenetetrahydrofolate (mTHF) as the methyl donor and reductant in the reaction, yielding dihydrofolate (DHF) as a by-product. This enzymatic reaction provides an intracellular de novo source of dTMP, an essential precursor for DNA biosynthesis. The polypeptide is Thymidylate synthase (Shigella boydii serotype 4 (strain Sb227)).